A 442-amino-acid polypeptide reads, in one-letter code: MVPSGVRTGRWVAAARAAQRRPRVDSLGQPPSPESASTRAALYVHWPYCEKRCSYCNFNKYIPRGVEEGTVRNCLVTEARTLLRLSGVQRVESVFFGGGTPSLASPHTVAAVLEAVAQEVYLPADSEVTLEANPTSAPGPRLAAFGAAGVNRLSIGLQSLDDAELQLLGRTHSASDALRTLAEARLLFPGRVSVDLMLGLPAQKVEPWLQQLQKLLYHCDDHLSLYQLTLERGTSLFAQVQQGTLPAPDPDLAAEMYQEGRTVLRDAGFRQYEVSNFARNGALSTHNWTYWQCGQYLGIGPGAHGRFVPQGTGGHTREARIQTLEPDNWMKEVTLFGHGTRKCVRLGKLELLEEVLAMGLRTDVGVTHQHWQQFEPQLTLWDVFGASKEVEELLAQGLLLLDYRGLRCSWEGLAVLDSLLLTLLPQLQEAWQHRPSSPVSGG.

Residues 1 to 17 constitute a mitochondrion transit peptide; sequence MVPSGVRTGRWVAAARA. The 237-residue stretch at 34 to 270 folds into the Radical SAM core domain; sequence ESASTRAALY…RTVLRDAGFR (237 aa). Tyr43 provides a ligand contact to S-adenosyl-L-methionine. [4Fe-4S] cluster is bound by residues Cys49, Cys53, and Cys56. S-adenosyl-L-methionine is bound by residues Gly98, 99–100, Glu131, Gln158, Arg170, and Asp195; that span reads GT.

It belongs to the anaerobic coproporphyrinogen-III oxidase family. HemW subfamily. It depends on [4Fe-4S] cluster as a cofactor.

The protein localises to the mitochondrion. Functionally, may be a heme chaperone, appears to bind heme. Homologous bacterial proteins do not have oxygen-independent coproporphyrinogen-III oxidase activity. Binds 1 [4Fe-4S] cluster. The cluster is coordinated with 3 cysteines and an exchangeable S-adenosyl-L-methionine. This chain is Radical S-adenosyl methionine domain-containing protein 1, mitochondrial (Rsad1), found in Mus musculus (Mouse).